The sequence spans 228 residues: Phosphoglycolate phosphatase 1 (228 aa).

D8 acts as the Nucleophile in catalysis. Mg(2+) is bound by residues D8 and D10. Residue K149 coordinates substrate. The Mg(2+) site is built by D172 and D176.

It belongs to the archaeal SPP-like hydrolase family. It depends on Mg(2+) as a cofactor.

The enzyme catalyses 2-phosphoglycolate + H2O = glycolate + phosphate. In terms of biological role, catalyzes the dephosphorylation of 2-phosphoglycolate. This chain is Phosphoglycolate phosphatase 1, found in Saccharolobus solfataricus (strain ATCC 35092 / DSM 1617 / JCM 11322 / P2) (Sulfolobus solfataricus).